The following is a 264-amino-acid chain: Phosphatidylglycerol--prolipoprotein diacylglyceryl transferase (264 aa).

A run of 7 helical transmembrane segments spans residues 14-34 (VGPL…LLFM), 57-77 (LLLY…VLFF), 89-109 (ILAI…VLVA), 127-147 (FIAP…FING), 176-196 (QLYQ…VYSA), 202-222 (KAVS…AEFF), and 235-255 (LGLS…VGLL). R140 contacts a 1,2-diacyl-sn-glycero-3-phospho-(1'-sn-glycerol).

The protein belongs to the Lgt family.

It is found in the cell inner membrane. The catalysed reaction is L-cysteinyl-[prolipoprotein] + a 1,2-diacyl-sn-glycero-3-phospho-(1'-sn-glycerol) = an S-1,2-diacyl-sn-glyceryl-L-cysteinyl-[prolipoprotein] + sn-glycerol 1-phosphate + H(+). The protein operates within protein modification; lipoprotein biosynthesis (diacylglyceryl transfer). In terms of biological role, catalyzes the transfer of the diacylglyceryl group from phosphatidylglycerol to the sulfhydryl group of the N-terminal cysteine of a prolipoprotein, the first step in the formation of mature lipoproteins. The polypeptide is Phosphatidylglycerol--prolipoprotein diacylglyceryl transferase (Aromatoleum aromaticum (strain DSM 19018 / LMG 30748 / EbN1) (Azoarcus sp. (strain EbN1))).